A 371-amino-acid chain; its full sequence is ETS-related transcription factor Elf-3 (371 aa).

The 87-residue stretch at 46–132 (NPQMSLEGTE…AQLRDLTSSS (87 aa)) folds into the PNT domain. Residues 137 to 145 (SWIIELLEK) carry the 9aaTAD motif. A disordered region spans residues 173-251 (GQQASPYHPG…HGKRKRGRPR (79 aa)). Residues 181 to 216 (PGSCGAGAPSPGSSDVSTAGTGASRSSHSSDSGGSD) are compositionally biased toward low complexity. Residues 231-241 (GFRDCKKGDPK) are compositionally biased toward basic and acidic residues. The segment covering 242–251 (HGKRKRGRPR) has biased composition (basic residues). Positions 273–355 (THLWEFIRDI…DGRRLVYKFG (83 aa)) form a DNA-binding region, ETS.

Belongs to the ETS family. Interacts with TBP. Interacts with CREBBP and EP300; these act as transcriptional coactivators of ELF3 and positively modulate its function. Interacts with XRCC5/KU86 and XRCC6/KU70; these inhibit the ability of ELF3 to bind DNA and negatively modulate its transcriptional activity. Associated with CLND7 and POU2F3. Interacts with ZNF768. As to expression, expressed exclusively in tissues containing a high content of terminally differentiated epithelial cells including mammary gland, colon, trachea, kidney, prostate, uterus, stomach and skin.

It is found in the cytoplasm. Its subcellular location is the nucleus. Transcriptional activator that binds and transactivates ETS sequences containing the consensus nucleotide core sequence GGA[AT]. Acts synergistically with POU2F3 to transactivate the SPRR2A promoter and with RUNX1 to transactivate the ANGPT1 promoter. Also transactivates collagenase, CCL20, CLND7, FLG, KRT8, NOS2, PTGS2, SPRR2B, TGFBR2 and TGM3 promoters. Represses KRT4 promoter activity. Involved in mediating vascular inflammation. May play an important role in epithelial cell differentiation and tumorigenesis. May be a critical downstream effector of the ERBB2 signaling pathway. May be associated with mammary gland development and involution. Plays an important role in the regulation of transcription with TATA-less promoters in preimplantation embryos, which is essential in preimplantation development. The chain is ETS-related transcription factor Elf-3 from Homo sapiens (Human).